The chain runs to 147 residues: Hemoglobin subunit beta (147 aa).

V2 is subject to N-acetylvaline. A Globin domain is found at 3–147 (HLADDEKAAV…VSTALAHKYH (145 aa)). Position 45 is a phosphoserine (S45). K60 is modified (N6-acetyllysine). H64 contacts heme b. At K83 the chain carries N6-acetyllysine. Residue H93 participates in heme b binding. C94 carries the S-nitrosocysteine modification. Residue K145 is modified to N6-acetyllysine.

Belongs to the globin family. In terms of assembly, heterotetramer of two alpha chains and two beta chains. In terms of tissue distribution, red blood cells.

In terms of biological role, involved in oxygen transport from the lung to the various peripheral tissues. This is Hemoglobin subunit beta (HBB) from Bradypus tridactylus (Pale-throated three-toed sloth).